The primary structure comprises 2009 residues: Sodium channel protein type 1 subunit alpha (2009 aa).

The Cytoplasmic portion of the chain corresponds to 1–128 (MEQTVLVPPG…KIAIKILVHS (128 aa)). The segment covering 28 to 48 (RIAEEKAKNPKPDKKDDDENG) has biased composition (basic and acidic residues). The disordered stretch occupies residues 28–60 (RIAEEKAKNPKPDKKDDDENGPKPNSDLEAGKN). An I repeat occupies 110–454 (ILTPFNPLRK…QQMLEQLKKQ (345 aa)). Residues 129–146 (LFSMLIMCTILTNCVFMT) traverse the membrane as a helical segment. Topologically, residues 147-152 (MSNPPD) are extracellular. The helical transmembrane segment at 153–177 (WTKNVEYTFTGIYTFESLIKIIARG) threads the bilayer. The Cytoplasmic segment spans residues 178–188 (FCLEDFTFLRD). A helical membrane pass occupies residues 189–205 (PWNWLDFTVITFAYVTE). Topologically, residues 206–213 (FVDLGNVS) are extracellular. An N-linked (GlcNAc...) asparagine glycan is attached at N211. The chain crosses the membrane as a helical span at residues 214 to 235 (ALRTFRVLRALKTISVIPGLKT). Residues 236–245 (IVGALIQSVK) lie on the Cytoplasmic side of the membrane. A helical membrane pass occupies residues 246 to 269 (KLSDVMILTVFCLSVFALIGLQLF). Topologically, residues 270 to 369 (MGNLRNKCVQ…YGYTSFDTFS (100 aa)) are extracellular. Intrachain disulfides connect C277-C345 and C336-C351. N-linked (GlcNAc...) asparagine glycosylation is found at N284, N295, N301, N306, and N338. Positions 370 to 384 (WAFLSLFRLMTQDFW) form an intramembrane region, pore-forming. Topologically, residues 385 to 397 (ENLYQLTLRAAGK) are extracellular. The helical transmembrane segment at 398-423 (TYMIFFVLVIFLGSFYLINLILAVVA) threads the bilayer. Topologically, residues 424-768 (MAYEEQNQAT…HIVNLVVMDP (345 aa)) are cytoplasmic. The segment at 458–528 (AQQAAAATAS…EFHKSESEDS (71 aa)) is disordered. S470 is modified (phosphoserine). A compositionally biased stretch (low complexity) spans 479–492 (LSDSSSEASKLSSK). Positions 495 to 506 (KERRNRRKKRKQ) are enriched in basic residues. Positions 507-528 (KEQSGGEEKDDDEFHKSESEDS) are enriched in basic and acidic residues. Phosphoserine occurs at positions 523, 525, 550, 551, 607, and 730. Positions 584–628 (VGSENDFADDEHSTFEDNESRRDSLFVPRRHGERRNSNLSQTSRS) are disordered. The span at 593–607 (DEHSTFEDNESRRDS) shows a compositional bias: basic and acidic residues. One copy of the II repeat lies at 750–1022 (CSPYWLKVKH…QIAVDRMHKG (273 aa)). A helical membrane pass occupies residues 769 to 787 (FVDLAITICIVLNTLFMAM). The Extracellular portion of the chain corresponds to 788 to 797 (EHYPMTEHFN). The chain crosses the membrane as a helical span at residues 798-820 (HVLTVGNLVFTGIFTAEMFLKII). The Cytoplasmic portion of the chain corresponds to 821-830 (AMDPYYYFQE). A helical membrane pass occupies residues 831-849 (GWNIFDGFIVTLSLVELGL). Over 850–854 (ANVEG) the chain is Extracellular. Residues 855–874 (LSVLRSFRLLRVFKLAKSWP) traverse the membrane as a helical segment. Over 875–891 (TLNMLIKIIGNSVGALG) the chain is Cytoplasmic. A helical transmembrane segment spans residues 892-912 (NLTLVLAIIVFIFAVVGMQLF). Residues 913-938 (GKSYKDCVCKIATDCKLPRWHMNDFF) are Extracellular-facing. C921 and C927 are joined by a disulfide. An intramembrane region (pore-forming) is located at residues 939–952 (HSFLIVFRVLCGEW). Over 953–965 (IETMWDCMEVAGQ) the chain is Extracellular. A disulfide bridge connects residues C959 and C968. Residues 966–992 (AMCLTVFMMVMVIRNLVVLNLFLALLL) traverse the membrane as a helical segment. Topologically, residues 993 to 1218 (SSFSADNLAA…RTCFRIVEHN (226 aa)) are cytoplasmic. Residues 1129-1163 (TEDFSSESDLEESKEKLNESSSSSEGSTVDIGAPA) form a disordered region. The III repeat unit spans residues 1200–1514 (RGKQWWNLRR…KKYYNAMKKL (315 aa)). Residues 1219–1237 (WFETFIVFMILLSSGALAF) traverse the membrane as a helical segment. Topologically, residues 1238–1250 (EDIYIDQRKTIKT) are extracellular. Residues 1251 to 1276 (MLEYADKVFTYIFILEMLLKWVAYGY) form a helical membrane-spanning segment. Topologically, residues 1277 to 1278 (QT) are cytoplasmic. A helical membrane pass occupies residues 1279 to 1304 (YFTNAWCWLDFLIVDVSLVSLTANAL). Residues 1305–1313 (GYSELGAIK) are Extracellular-facing. Residues 1314–1332 (SLRTLRALRPLRALSRFEG) traverse the membrane as a helical segment. Topologically, residues 1333 to 1345 (MRVVVNALLGAIP) are cytoplasmic. Residues 1346-1369 (SIMNVLLVCLIFWLIFSIMGVNLF) form a helical membrane-spanning segment. The Extracellular segment spans residues 1370–1415 (AGKFYHCVNTTTGDTFEITEVNNHSDCLKLIERNETARWKNVKVNF). Residues C1376 and C1396 are joined by a disulfide bond. 3 N-linked (GlcNAc...) asparagine glycosylation sites follow: N1378, N1392, and N1403. An intramembrane region (pore-forming) is located at residues 1416 to 1433 (DNVGFGYLSLLQVATFKG). Topologically, residues 1434-1457 (WMDIMYAAVDSRNVELQPKYEESL) are extracellular. The helical transmembrane segment at 1458–1483 (YMYLYFVIFIIFGSFFTLNLFIGVII) threads the bilayer. At 1484 to 1541 (DNFNQQKKKFGGQDIFMTEEQKKYYNAMKKLGSKKPQKPIPRPGNKFQGMVFDFVTRQ) the chain is on the cytoplasmic side. Position 1516 is a phosphoserine; by PKC (S1516). An IV repeat occupies 1523–1821 (IPRPGNKFQG…WEKFDPDATQ (299 aa)). Residues 1542-1560 (VFDISIMILICLNMVTMMV) form a helical membrane-spanning segment. The Extracellular segment spans residues 1561–1571 (ETDDQSDYVTS). Positions 1561–1571 (ETDDQSDYVTS) are S1-S2 loop of repeat IV. A helical membrane pass occupies residues 1572 to 1593 (ILSRINLVFIVLFTGECVLKLI). The Cytoplasmic segment spans residues 1594 to 1601 (SLRHYYFT). The chain crosses the membrane as a helical span at residues 1602 to 1623 (IGWNIFDFVVVILSIVGMFLAE). The S3b-S4 loop of repeat IV stretch occupies residues 1619–1636 (MFLAELIEKYFVSPTLFR). Residues 1624 to 1636 (LIEKYFVSPTLFR) are Extracellular-facing. The chain crosses the membrane as a helical span at residues 1637 to 1655 (VIRLARIGRILRLIKGAKG). Residues 1656–1665 (IRTLLFALMM) are Cytoplasmic-facing. The helical transmembrane segment at 1666–1688 (SLPALFNIGLLLFLVMFIYAIFG) threads the bilayer. The Extracellular segment spans residues 1689 to 1711 (MSNFAYVKREVGIDDMFNFETFG). The pore-forming intramembrane region spans 1712–1726 (NSMICLFQITTSAGW). Residues 1727–1759 (DGLLAPILNSKPPDCDPNKVNPGSSVKGDCGNP) lie on the Extracellular side of the membrane. The cysteines at positions 1741 and 1756 are disulfide-linked. Residues 1760-1788 (SVGIFFFVSYIIISFLVVVNMYIAVILEN) form a helical membrane-spanning segment. Over 1789–2009 (FSVATEESAE…EGKDEKAKGK (221 aa)) the chain is Cytoplasmic. The IQ domain occupies 1915 to 1944 (EEVSAVIIQRAYRRHLLKRTVKQASFTYNK). Residues 1986–2009 (YDRVTKPIVEKHEQEGKDEKAKGK) form a disordered region. Residues 1988-2009 (RVTKPIVEKHEQEGKDEKAKGK) show a composition bias toward basic and acidic residues.

This sequence belongs to the sodium channel (TC 1.A.1.10) family. Nav1.1/SCN1A subfamily. As to quaternary structure, the Nav1.1 voltage-gated sodium channel consists of an ion-conducting alpha subunit SCN1A which is functional on its own regulated by one or more beta-1 (SCN1B), beta-2 (SCN2B), beta-3 (SCN3B) and beta-4 (SCN4B) subunits. SCN1B and SCN3B are non-covalently associated with SCN1A. SCN2B and SCN4B are disulfide-linked to SCN1A. SCN1B regulates both the expression at the plasma membrane and the voltage dependence of Nav1.1 inactivation. SCN3B and SCN4B reduce Nav1.1 conductance. Probably interacts with TMEM233; modulates the gating properties of NaV1.1. Interacts with FGF13; regulates the steady-state inactivation of Nav.1.1. Phosphorylation at Ser-1516 by PKC in a highly conserved cytoplasmic loop slows inactivation of the sodium channel and reduces peak sodium currents.

Its subcellular location is the cell membrane. The catalysed reaction is Na(+)(in) = Na(+)(out). Activated by the spider toxins Hm1a and Hm1b (H.maculata, AC P60992 and AC P0DOC5) eliciting acute pain and mechanical allodynia. Inhibited by the conotoxin GVIIJ. Pore-forming subunit of Nav1.1, a voltage-gated sodium (Nav) channel that directly mediates the depolarizing phase of action potentials in excitable membranes. Navs, also called VGSCs (voltage-gated sodium channels) or VDSCs (voltage-dependent sodium channels), operate by switching between closed and open conformations depending on the voltage difference across the membrane. In the open conformation they allow Na(+) ions to selectively pass through the pore, along their electrochemical gradient. The influx of Na(+) ions provokes membrane depolarization, initiating the propagation of electrical signals throughout cells and tissues. By regulating the excitability of neurons, ensures that they respond appropriately to synaptic inputs, maintaining the balance between excitation and inhibition in brain neural circuits. Nav1.1 plays a role in controlling the excitability and action potential propagation from somatosensory neurons, thereby contributing to the sensory perception of mechanically-induced pain. The polypeptide is Sodium channel protein type 1 subunit alpha (Rattus norvegicus (Rat)).